We begin with the raw amino-acid sequence, 516 residues long: Alstonine synthase (516 aa).

A helical transmembrane segment spans residues 6 to 26 (NFSLTSPIFLLLSSLFLIILL). Residue C453 participates in heme binding.

Belongs to the cytochrome P450 family. Heme serves as cofactor. As to expression, highly expressed in stems. Expressed at low levels in roots.

Its subcellular location is the endoplasmic reticulum membrane. The catalysed reaction is tetrahydroalstonine + A + reduced [NADPH--hemoprotein reductase] + O2 = alstonine + AH2 + oxidized [NADPH--hemoprotein reductase] + 2 H2O + H(+). It catalyses the reaction ajmalicine + A + reduced [NADPH--hemoprotein reductase] + O2 = serpentine + AH2 + oxidized [NADPH--hemoprotein reductase] + 2 H2O + H(+). The protein operates within alkaloid biosynthesis. Functionally, involved in monoterpene indole alkaloids (MIAs) biosynthesis. Converts by aromatization the tetrahydro-beta-carboline alkaloids tetrahydroalstonine and ajmalicine to the corresponding beta-carboline alkaloids alstonine and serpentine, respectively. In Catharanthus roseus (Madagascar periwinkle), this protein is Alstonine synthase.